We begin with the raw amino-acid sequence, 427 residues long: Histidine--tRNA ligase (427 aa).

Belongs to the class-II aminoacyl-tRNA synthetase family. Homodimer.

The protein resides in the cytoplasm. It catalyses the reaction tRNA(His) + L-histidine + ATP = L-histidyl-tRNA(His) + AMP + diphosphate + H(+). The polypeptide is Histidine--tRNA ligase (Alteromonas mediterranea (strain DSM 17117 / CIP 110805 / LMG 28347 / Deep ecotype)).